A 596-amino-acid polypeptide reads, in one-letter code: Elongation factor 4 (596 aa).

One can recognise a tr-type G domain in the interval 2 to 184 (KHIRNFSIIA…VIVAQIPPPE (183 aa)). GTP contacts are provided by residues 14–19 (DHGKST) and 131–134 (NKID).

It belongs to the TRAFAC class translation factor GTPase superfamily. Classic translation factor GTPase family. LepA subfamily.

It is found in the cell inner membrane. It catalyses the reaction GTP + H2O = GDP + phosphate + H(+). Functionally, required for accurate and efficient protein synthesis under certain stress conditions. May act as a fidelity factor of the translation reaction, by catalyzing a one-codon backward translocation of tRNAs on improperly translocated ribosomes. Back-translocation proceeds from a post-translocation (POST) complex to a pre-translocation (PRE) complex, thus giving elongation factor G a second chance to translocate the tRNAs correctly. Binds to ribosomes in a GTP-dependent manner. This chain is Elongation factor 4, found in Shewanella halifaxensis (strain HAW-EB4).